The following is a 352-amino-acid chain: Selenide, water dikinase (352 aa).

C23 is a catalytic residue. Residues K26 and 54-56 (SRD) contribute to the ATP site. D57 is a binding site for Mg(2+). ATP contacts are provided by residues D74, D97, and 145-147 (GHS). D97 contributes to the Mg(2+) binding site. D233 is a binding site for Mg(2+).

It belongs to the selenophosphate synthase 1 family. Class I subfamily. In terms of assembly, homodimer. Requires Mg(2+) as cofactor.

It catalyses the reaction hydrogenselenide + ATP + H2O = selenophosphate + AMP + phosphate + 2 H(+). Its function is as follows. Synthesizes selenophosphate from selenide and ATP. This is Selenide, water dikinase from Shewanella baltica (strain OS155 / ATCC BAA-1091).